The chain runs to 235 residues: (5-formylfuran-3-yl)methyl phosphate synthase (235 aa).

The active-site Schiff-base intermediate with substrate is the Lys-27. Lys-86 acts as the Proton acceptor in catalysis.

The protein belongs to the MfnB family.

The enzyme catalyses 2 D-glyceraldehyde 3-phosphate = 4-(hydroxymethyl)-2-furancarboxaldehyde phosphate + phosphate + 2 H2O. It participates in cofactor biosynthesis; methanofuran biosynthesis. Functionally, catalyzes the formation of 4-(hydroxymethyl)-2-furancarboxaldehyde phosphate (4-HFC-P) from two molecules of glyceraldehyde-3-P (GA-3-P). This Archaeoglobus fulgidus (strain ATCC 49558 / DSM 4304 / JCM 9628 / NBRC 100126 / VC-16) protein is (5-formylfuran-3-yl)methyl phosphate synthase.